Here is a 277-residue protein sequence, read N- to C-terminus: Uridine phosphorylase (277 aa).

Belongs to the PNP/UDP phosphorylase family.

Its subcellular location is the cytoplasm. The catalysed reaction is uridine + phosphate = alpha-D-ribose 1-phosphate + uracil. It functions in the pathway pyrimidine metabolism; UMP biosynthesis via salvage pathway; uracil from uridine (phosphorylase route): step 1/1. Its function is as follows. Catalyzes the reversible phosphorylytic cleavage of uridine to uracil and ribose-1-phosphate. The protein is Uridine phosphorylase of Thermococcus kodakarensis (strain ATCC BAA-918 / JCM 12380 / KOD1) (Pyrococcus kodakaraensis (strain KOD1)).